The following is a 372-amino-acid chain: MSAPNHSYDPVEVTPLHPDEVARMRDEALEAIAKASTLEELKKVRIAHAGDRSPLALANREIGALPPAARADAGRRVGGARREVNEALKARQAQLEEEHEARVLVEETVDVTLPYDRIPRGARHPLTTIAERMADIFVGMGFEIAEGPEVEAEWYNFDALNFLPDHPARTMQDTFFIAGPDGEESGMVLRTHTSPVQVRALLDRELPVYVVVPGRTFRTDELDATHSPVFHQLEGLVVDEGITLAHLRGAIQLFVERMFGEGLRTRMRPSYFPFTEPSAEVDMECFVCRGASVGNPEAPCRTCSSEGWIEIGGCGVVNPRVLVAAGVDTERYSGWAFGLGIERTLMFAHGVKDMHDMVEGDVRFTAAFGMEM.

E276 is a Mg(2+) binding site.

The protein belongs to the class-II aminoacyl-tRNA synthetase family. Phe-tRNA synthetase alpha subunit type 1 subfamily. Tetramer of two alpha and two beta subunits. The cofactor is Mg(2+).

It localises to the cytoplasm. The catalysed reaction is tRNA(Phe) + L-phenylalanine + ATP = L-phenylalanyl-tRNA(Phe) + AMP + diphosphate + H(+). In Thermobifida fusca (strain YX), this protein is Phenylalanine--tRNA ligase alpha subunit.